The following is a 622-amino-acid chain: Low affinity potassium transport system protein Kup (622 aa).

Transmembrane regions (helical) follow at residues 9–29 (LPAITLAAIGVVYGDIGTSPL), 49–69 (VFGFLSLIFWLLIFVVSIKYL), 103–123 (VIMGLIGGSFFYGEVVITPAI), 137–157 (PQLDTWIVPLSIIVLTLLFMI), 165–185 (VGQLFAPIMLTWFLILAGLGL), 213–233 (VSFIALGAVVLSITGVEALYA), 247–267 (WFTVVLPSLTLNYFGQGALLL), 276–296 (PFFLLAPDWALIPLLIIAALA), 337–357 (IYIPFVNWMLYVAVVIVIVSF), 363–383 (LAAAYGIAVTGTMVLTSILST), 396–416 (FVALILIAFLCVDIPLFTANL), and 419–439 (LLSGGWLPLSLGTVMFIVMTT).

This sequence belongs to the HAK/KUP transporter (TC 2.A.72) family.

It is found in the cell inner membrane. It carries out the reaction K(+)(in) + H(+)(in) = K(+)(out) + H(+)(out). Functionally, responsible for the low-affinity transport of potassium into the cell. Likely operates as a K(+):H(+) symporter. The polypeptide is Low affinity potassium transport system protein Kup (Escherichia coli O6:K15:H31 (strain 536 / UPEC)).